The primary structure comprises 431 residues: UDP-N-acetylglucosamine--N-acetylmuramyl-(pentapeptide) pyrophosphoryl-undecaprenol N-acetylglucosamine transferase (431 aa).

UDP-N-acetyl-alpha-D-glucosamine contacts are provided by residues 29 to 31, Asn-141, Arg-177, Ser-205, Ile-258, and Gln-303; that span reads TGG. Residues 370 to 431 form a disordered region; the sequence is AGSGDGQPPA…NPGASAGGAP (62 aa). Residues 395-420 show a composition bias toward polar residues; the sequence is KQGSMQTSVNGDRSAQLIATNPQSRL.

This sequence belongs to the glycosyltransferase 28 family. MurG subfamily.

Its subcellular location is the cell inner membrane. The enzyme catalyses di-trans,octa-cis-undecaprenyl diphospho-N-acetyl-alpha-D-muramoyl-L-alanyl-D-glutamyl-meso-2,6-diaminopimeloyl-D-alanyl-D-alanine + UDP-N-acetyl-alpha-D-glucosamine = di-trans,octa-cis-undecaprenyl diphospho-[N-acetyl-alpha-D-glucosaminyl-(1-&gt;4)]-N-acetyl-alpha-D-muramoyl-L-alanyl-D-glutamyl-meso-2,6-diaminopimeloyl-D-alanyl-D-alanine + UDP + H(+). It participates in cell wall biogenesis; peptidoglycan biosynthesis. Cell wall formation. Catalyzes the transfer of a GlcNAc subunit on undecaprenyl-pyrophosphoryl-MurNAc-pentapeptide (lipid intermediate I) to form undecaprenyl-pyrophosphoryl-MurNAc-(pentapeptide)GlcNAc (lipid intermediate II). This is UDP-N-acetylglucosamine--N-acetylmuramyl-(pentapeptide) pyrophosphoryl-undecaprenol N-acetylglucosamine transferase from Xanthomonas euvesicatoria pv. vesicatoria (strain 85-10) (Xanthomonas campestris pv. vesicatoria).